The primary structure comprises 79 residues: Sulfur carrier protein TusA (79 aa).

The active-site Cysteine persulfide intermediate is cysteine 17.

The protein belongs to the sulfur carrier protein TusA family.

Its subcellular location is the cytoplasm. Sulfur carrier protein which probably makes part of a sulfur-relay system. The chain is Sulfur carrier protein TusA from Haemophilus ducreyi (strain 35000HP / ATCC 700724).